Consider the following 418-residue polypeptide: MDKFVITGGVPLKGTIPTNGSKNSALPALAAALLTAEPVTLHRVPRVRDIRTMERLLVDIGTTVDVEGETVRLRTERIVSPEAPYELVKTMRASSLVLGPLVARSGRARVSLPGGCAIGARPINLHIFGLEQLGAKINQTHGYIEAVAPDGLRGAVVHFDRITVTGTEDLMMAAVLAKGETLLRNAAREPEVVDLAELLIKMGAKIEGAGTSTIRIQGVESLGGAVHAIIADRIEAGTFLVAGAITGGDLTVTDCIPEHVGALVSKLQQAGVDVTQPSETTVRVRGTGRLRSVDMTTEEYPGFATDLQAQYMALMTQAEGIAVVIENIFENRFMHAQELARMGANIRIDGRQAIVAGPRELTGAGVIASDLRASASLVLGALVARGETVIDRVYHIDRGYEKIEAKLAGVGAKIRRVE.

A phosphoenolpyruvate-binding site is contributed by 22–23 (KN). Arg92 provides a ligand contact to UDP-N-acetyl-alpha-D-glucosamine. Cys116 functions as the Proton donor in the catalytic mechanism. Cys116 is modified (2-(S-cysteinyl)pyruvic acid O-phosphothioketal). UDP-N-acetyl-alpha-D-glucosamine is bound by residues Asp306 and Ile328.

The protein belongs to the EPSP synthase family. MurA subfamily.

It localises to the cytoplasm. The enzyme catalyses phosphoenolpyruvate + UDP-N-acetyl-alpha-D-glucosamine = UDP-N-acetyl-3-O-(1-carboxyvinyl)-alpha-D-glucosamine + phosphate. Its pathway is cell wall biogenesis; peptidoglycan biosynthesis. Cell wall formation. Adds enolpyruvyl to UDP-N-acetylglucosamine. The polypeptide is UDP-N-acetylglucosamine 1-carboxyvinyltransferase (Solibacter usitatus (strain Ellin6076)).